The primary structure comprises 46 residues: Mu-segestritoxin-Sf1f (46 aa).

Cystine bridges form between cysteine 3-cysteine 19, cysteine 10-cysteine 22, cysteine 18-cysteine 42, and cysteine 24-cysteine 40. The keys region for toxin activity stretch occupies residues 31 to 33 (RPW).

It belongs to the neurotoxin 16 (SFI) family. Expressed by the venom gland.

The protein resides in the secreted. In terms of biological role, insecticidal toxin. It inhibits insect voltage-gated sodium channels (Nav) by partially blocking the channel pore in DUM neurons from the American cockroach, not by acting as a gating modifier. The inhibition is only partially reversible after prolonged washout. In vivo, the toxin causes flaccid paralysis followed by death when injected into Heliothis virescens larvae. It also causes uncoordinated movements followed by full paralysis to sheep blowflies (Lucilia cuprina). When the toxin is fused to snowdrop lectin, it is orally active against larvae of the tomato moth (Laconobia oleracea), the rice brown planthopper (Nilaparvata lugens), and the peach-potato aphid (Myzus persicae). The sequence is that of Mu-segestritoxin-Sf1f from Segestria florentina (Tube-web spider).